A 468-amino-acid polypeptide reads, in one-letter code: Probable 1,4-beta-D-glucan cellobiohydrolase C (468 aa).

A signal peptide spans M1 to A18. Residues Q19–L54 form the CBM1 domain. 2 disulfide bridges follow: C26–C43 and C37–C53. Residues T57 to T106 are thr-rich linker. The interval T68–S107 is disordered. The catalytic stretch occupies residues S107–F468. The active site involves D198. Disulfide bonds link C199/C258 and C390/C437. D244 serves as the catalytic Proton donor. D423 (nucleophile) is an active-site residue.

This sequence belongs to the glycosyl hydrolase 6 (cellulase B) family.

Its subcellular location is the secreted. The catalysed reaction is Hydrolysis of (1-&gt;4)-beta-D-glucosidic linkages in cellulose and cellotetraose, releasing cellobiose from the non-reducing ends of the chains.. In terms of biological role, the biological conversion of cellulose to glucose generally requires three types of hydrolytic enzymes: (1) Endoglucanases which cut internal beta-1,4-glucosidic bonds; (2) Exocellobiohydrolases that cut the disaccharide cellobiose from the non-reducing end of the cellulose polymer chain; (3) Beta-1,4-glucosidases which hydrolyze the cellobiose and other short cello-oligosaccharides to glucose. The sequence is that of Probable 1,4-beta-D-glucan cellobiohydrolase C (cbhC) from Aspergillus terreus (strain NIH 2624 / FGSC A1156).